The sequence spans 518 residues: Glutamate--cysteine ligase (518 aa).

Belongs to the glutamate--cysteine ligase type 1 family. Type 1 subfamily.

It carries out the reaction L-cysteine + L-glutamate + ATP = gamma-L-glutamyl-L-cysteine + ADP + phosphate + H(+). Its pathway is sulfur metabolism; glutathione biosynthesis; glutathione from L-cysteine and L-glutamate: step 1/2. This Buchnera aphidicola subsp. Acyrthosiphon pisum (strain 5A) protein is Glutamate--cysteine ligase.